The following is a 4367-amino-acid chain: Guanylate cyclase (4367 aa).

Residues 1-10 are compositionally biased toward polar residues; it reads MKKTRTTAAE. The interval 1-70 is disordered; sequence MKKTRTTAAE…MSFLQGKHQQ (70 aa). Residues 1-150 are Cytoplasmic-facing; that stretch reads MKKTRTTAAE…FKNLWEQFHR (150 aa). Residues 19–33 are compositionally biased toward basic and acidic residues; sequence PHDEHRGRGREHGGA. A compositionally biased stretch (polar residues) spans 54-63; sequence HQATQKQMSF. Residues 151–171 form a helical membrane-spanning segment; it reads VINWWFLVMAIIQAIPQLHYN. Over 172–174 the chain is Extracellular; that stretch reads PNH. A helical membrane pass occupies residues 175–195; the sequence is AWSTALPFAIVLVFGMLKDAF. The Cytoplasmic portion of the chain corresponds to 196-373; it reads TDLGRRERDR…GFKRPHIEKD (178 aa). A helical transmembrane segment spans residues 374–394; the sequence is INTYLFISFFIVFLTILISVM. At 395–452 the chain is on the extracellular side; sequence SKWSVQERDSGDTGVTDAGASSGSGSSSGETSQTYGSSVEFMLGSRDLLQNPWMSILR. Residues 402 to 426 form a disordered region; sequence RDSGDTGVTDAGASSGSGSSSGETS. Positions 407-426 are enriched in low complexity; sequence TGVTDAGASSGSGSSSGETS. A helical transmembrane segment spans residues 453-473; it reads FLAVYAPVLPLSLPLILDVVY. The Cytoplasmic portion of the chain corresponds to 474–2258; sequence LLQSVLIEGD…VHGRLSLMRV (1785 aa). 10 disordered regions span residues 486–535, 550–699, 831–918, 932–966, 980–1047, 1079–1164, 1344–1593, 1607–1652, 1773–1861, and 1881–1946; these read IRGG…QQPL, SEKF…ISGR, ETSA…ASSL, RLEE…PQLA, VGIQ…GELS, GMSF…MPAV, PSGT…SLKS, FRRG…TGTG, GGRG…GLRS, and DKQH…PQHL. The span at 523–535 shows a compositional bias: polar residues; sequence AHSSQNASLQQPL. Basic and acidic residues-rich tracts occupy residues 605-628 and 670-679; these read ETLR…REQL and RRSDDRDRKS. Low complexity predominate over residues 850 to 863; it reads SAASSRSQSAPASA. The segment covering 880-892 has biased composition (polar residues); sequence QTLTNQQTGQQSP. Residues 906–917 show a composition bias toward low complexity; the sequence is ASPGAADSPASS. Basic and acidic residues predominate over residues 932-948; that stretch reads RLEETGSQKEEDSRSDR. The span at 983–996 shows a compositional bias: low complexity; it reads QSQHSSQSLLSSRQ. The segment covering 1025–1047 has biased composition (basic and acidic residues); sequence DRMYSRDYHRESRSSSPRDGELS. Polar residues-rich tracts occupy residues 1084–1094 and 1117–1130; these read SRPSSQFTFSS and RSLT…TASP. The segment covering 1344–1357 has biased composition (low complexity); sequence PSGTSASSGAPSGP. Gly residues-rich tracts occupy residues 1370–1381 and 1389–1400; these read QGQGHGSLGAPG and CLGGAGGSGARG. The span at 1443-1454 shows a compositional bias: pro residues; it reads VPSPRPLSPAGP. A compositionally biased stretch (basic and acidic residues) spans 1527–1542; sequence SFKEKHEEFAFSKDED. The segment covering 1543–1567 has biased composition (acidic residues); the sequence is TATVDQDDTQSATDEEHDVEGEEEE. A compositionally biased stretch (low complexity) spans 1583 to 1593; that stretch reads SASASLMSLKS. Polar residues-rich tracts occupy residues 1628-1652, 1779-1791, and 1843-1852; these read GRSS…TGTG, VSLS…SSAK, and VNPSGQTYSQ. Basic and acidic residues predominate over residues 1881-1922; sequence DKQHQRGHGPEGDEGSHELEGHDAHTGDSHGGHHRDQAEPRA. Residues 1933–1942 show a composition bias toward polar residues; the sequence is RLPQKTQNRL. A helical membrane pass occupies residues 2259 to 2279; it reads STVILWSFFKSLCIGLPTFLF. Residues 2280–2289 lie on the Extracellular side of the membrane; sequence QPQAFWSAVE. A helical transmembrane segment spans residues 2290–2310; the sequence is VYDPLLLMIVDFFWTTLPGII. At 2311–2343 the chain is on the cytoplasmic side; that stretch reads HGYSDQDLPTHLLPSVPVLYTPGRRRLYFNGFR. A helical transmembrane segment spans residues 2344-2364; it reads FILWTVEGIIYSFLIFYLLQA. The Extracellular portion of the chain corresponds to 2365–2376; sequence TWMDGNTFHDGQ. A helical membrane pass occupies residues 2377 to 2397; sequence VLGFHSYGILLLFGSLLQSNV. The Cytoplasmic segment spans residues 2398-2408; sequence RIILETSLWTP. Residues 2409–2429 traverse the membrane as a helical segment; the sequence is TFLFTTIVLCTIMFFPTVLLY. At 2430 to 2444 the chain is on the extracellular side; that stretch reads SVTGWPRRYMELAGR. The chain crosses the membrane as a helical span at residues 2445-2465; sequence VVFAWPMLYFLIPLWVSIGIL. The Cytoplasmic portion of the chain corresponds to 2466-2724; sequence VQLLLQVFTS…LKRLVPWYRV (259 aa). Residues 2725–2745 form a helical membrane-spanning segment; that stretch reads IFMLIALYQLLSFLTEYFIDI. Residues 2746–2762 are Extracellular-facing; sequence HWNPGETEMEPWMCVPT. Residues 2763–2783 traverse the membrane as a helical segment; that stretch reads LVVEIGFAAVVVCTFYDFIFL. At 2784-2785 the chain is on the cytoplasmic side; sequence DH. Residues 2786–2806 traverse the membrane as a helical segment; that stretch reads FSLILNSIVFLMVSSSIVFYT. The Extracellular segment spans residues 2807–2823; sequence ASHVDGTLTSVLFPVFT. The helical transmembrane segment at 2824–2844 threads the bilayer; that stretch reads FVILRISFLQAVVWNILFLIV. The Cytoplasmic portion of the chain corresponds to 2845 to 2858; the sequence is TVARFMLDKKYLPP. Residues 2859-2879 form a helical membrane-spanning segment; it reads LNFVHYIPLFIGIDVFVAFVG. Residues 2880 to 2903 lie on the Extracellular side of the membrane; sequence YRLEYNQRKSFLLDYSVDASRRKQ. The helical transmembrane segment at 2904–2924 threads the bilayer; sequence REILNTMLPSFVVDQMINSEL. The Cytoplasmic segment spans residues 2925-3693; it reads NEEGIPTSLK…RTHFYNNKSN (769 aa). The region spanning 2942 to 3150 is the Guanylate cyclase 1 domain; it reads SVIFCDVYEF…DTVNTASRMK (209 aa). 6 disordered regions span residues 3214–3245, 3359–3402, 3456–3475, 3485–3508, 3523–3596, and 3620–3653; these read DVIS…ASSG, GQTE…SRFD, SGDE…EVPL, QARE…HTPT, GCAA…ETEK, and FRRR…VDDE. Over residues 3383–3402 the composition is skewed to basic and acidic residues; sequence RADRRPAGRREDSRGDSRFD. Composition is skewed to basic and acidic residues over residues 3485–3499, 3529–3541, and 3549–3569; these read QARE…KRSG, EEEK…RESE, and TESR…DARE. The span at 3626-3637 shows a compositional bias: low complexity; the sequence is AAPSEAASPSSA. Residues 3694 to 3714 traverse the membrane as a helical segment; it reads INTIEQALIIFLVTFCVQTLT. The Extracellular segment spans residues 3715–3736; the sequence is RLALPRFYVVCSHHTINLHVCT. A helical membrane pass occupies residues 3737-3757; it reads GLYWAVRATYTLAAFVLWMLF. The Cytoplasmic portion of the chain corresponds to 3758–3772; that stretch reads HYRNRKEVATCLELR. Residues 3773–3793 form a helical membrane-spanning segment; the sequence is WMVFLLNLLFISASCVFALSN. At 3794 to 3895 the chain is on the extracellular side; that stretch reads SWGVCGQQQE…GSDLVTANGR (102 aa). A helical transmembrane segment spans residues 3896 to 3916; the sequence is AYTYWLLSDTIELFFYIVILH. Topologically, residues 3917-3921 are cytoplasmic; the sequence is HNTGL. Residues 3922–3942 traverse the membrane as a helical segment; it reads LFQNCILVDVLLMTMSLTFII. The Extracellular portion of the chain corresponds to 3943–3950; that stretch reads TTARETAS. The helical transmembrane segment at 3951-3971 threads the bilayer; sequence TVSTIATFPCYVFFNLVSAYC. Residues 3972–4367 lie on the Cytoplasmic side of the membrane; the sequence is KEYIDRLTFY…GSTPGSALGS (396 aa). Residues 4024-4159 form the Guanylate cyclase 2 domain; it reads TFLFADICGF…MDVLTGNMME (136 aa). Residues aspartate 4029, isoleucine 4030, and aspartate 4073 each coordinate Mg(2+). Residues 4292–4367 are disordered; sequence ASHGDSGPSD…GSTPGSALGS (76 aa). Residues 4333–4344 are compositionally biased toward basic and acidic residues; it reads DGLKQLRKEIER. A compositionally biased stretch (polar residues) spans 4356-4367; that stretch reads DIGSTPGSALGS.

The protein in the N-terminal section; belongs to the cation transport ATPase (P-type) (TC 3.A.3) family. Type IV subfamily. In the C-terminal section; belongs to the adenylyl cyclase class-4/guanylyl cyclase family. In terms of assembly, interacts with chaperone CDC50.1; the interaction regulates guanylate cyclase GC trafficking and sensing environmental changes. Interacts with UGO; the interaction regulates guanylate cyclase GC trafficking and catalytic activity. Mg(2+) serves as cofactor. It depends on Mn(2+) as a cofactor.

The protein resides in the cell membrane. It carries out the reaction GTP = 3',5'-cyclic GMP + diphosphate. Functionally, catalyzes the synthesis of the second messenger cGMP from GTP. During the tachyzoite lytic growth cycle in host cells, detects and transduces environmental changes in potassium, phosphatidic acid and pH levels. By producing cGMP in response to these environmental changes, activates PKG and thereby regulates PKG-dependent microneme secretion which is essential for tachyzoite motility, host cell attachment invasion of and egress from host cells. May play a role in the fission of connected tachyzoites at their basal pole during egress. Does not display flippase activity towards phosphatidylserine, phosphatidic acid or phosphatidylcholine. In Toxoplasma gondii (strain ATCC 50853 / GT1), this protein is Guanylate cyclase.